The primary structure comprises 427 residues: Large ribosomal subunit protein uL4 (427 aa).

Residue Ala2 is modified to N-acetylalanine. An N6-acetyllysine modification is found at Lys14. Omega-N-methylarginine is present on Arg97. N6-acetyllysine is present on Lys106. A Glycyl lysine isopeptide (Lys-Gly) (interchain with G-Cter in SUMO2) cross-link involves residue Lys239. Lys259 is modified (N6-acetyllysine). Thr266 carries the phosphothreonine modification. Phosphoserine occurs at positions 290 and 295. Citrulline is present on Arg300. Lys327 participates in a covalent cross-link: Glycyl lysine isopeptide (Lys-Gly) (interchain with G-Cter in SUMO2). N6-acetyllysine is present on residues Lys333 and Lys353. Lys364 is subject to N6-acetyllysine; alternate. Residue Lys364 forms a Glycyl lysine isopeptide (Lys-Gly) (interchain with G-Cter in SUMO1); alternate linkage. Ser365 bears the Phosphoserine mark. A disordered region spans residues Ala369–Ala427. Residues Val377–Val397 are compositionally biased toward basic residues. Residues Pro407 to Ala427 show a composition bias toward basic and acidic residues.

It belongs to the universal ribosomal protein uL4 family. Component of the large ribosomal subunit. May bind IPO9 with low affinity. Interacts with RBM3. In terms of processing, citrullinated by PADI4.

The protein localises to the cytoplasm. Its function is as follows. Component of the large ribosomal subunit. The ribosome is a large ribonucleoprotein complex responsible for the synthesis of proteins in the cell. The chain is Large ribosomal subunit protein uL4 (RPL4) from Homo sapiens (Human).